A 368-amino-acid chain; its full sequence is Galactoside 2-alpha-L-fucosyltransferase Sec1 (368 aa).

Over 1–20 the chain is Cytoplasmic; sequence MPSDSCLLSLTVLQRLRAIC. Residues 21–41 form a helical; Signal-anchor for type II membrane protein membrane-spanning segment; it reads PPLSTFYLFFVIFVVSTIFHC. Residues 42–368 lie on the Lumenal side of the membrane; that stretch reads HRRLGLVPAP…APKRHWGALL (327 aa). N-linked (GlcNAc...) asparagine glycans are attached at residues asparagine 195, asparagine 289, and asparagine 315.

The protein belongs to the glycosyltransferase 11 family.

The protein localises to the golgi apparatus. It is found in the golgi stack membrane. It catalyses the reaction a ganglioside GM1 + GDP-beta-L-fucose = a ganglioside Fuc-GM1 + GDP + H(+). Its pathway is protein modification; protein glycosylation. Functionally, catalyzes the transfer of alpha 1,2-linked fucose to ganglioside GM1 and galacto-N-biose. The chain is Galactoside 2-alpha-L-fucosyltransferase Sec1 from Mus musculus (Mouse).